A 624-amino-acid chain; its full sequence is Na(+)/H(+) antiporter NhaA (624 aa).

Residues 1 to 164 (MNPELPPNHL…TFFINGRRYD (164 aa)) are unknown. Residues 165–624 (GPWDVRSLSE…NAQAEEEKNP (460 aa)) are na(+)/H(+) antiporter NhaA. 11 helical membrane-spanning segments follow: residues 199 to 219 (GIML…ALGP), 240 to 260 (LSLR…VVGL), 279 to 299 (LPIA…LILV), 319 to 339 (GWGV…AMMG), 348 to 368 (VFLT…VAIF), 371 to 391 (GELH…LALL), 407 to 427 (IVLW…GIIL), 497 to 517 (FLVL…TSVF), 521 to 541 (IPLM…GFIT), 565 to 585 (GAGA…SQAF), and 596 to 616 (IAIF…LWNA).

The protein belongs to the NhaA Na(+)/H(+) (TC 2.A.33) antiporter family.

It is found in the cell inner membrane. The enzyme catalyses Na(+)(in) + 2 H(+)(out) = Na(+)(out) + 2 H(+)(in). In terms of biological role, na(+)/H(+) antiporter that extrudes sodium in exchange for external protons. The polypeptide is Na(+)/H(+) antiporter NhaA (Nitrosospira multiformis (strain ATCC 25196 / NCIMB 11849 / C 71)).